The following is a 276-amino-acid chain: Large ribosomal subunit protein uL2 (276 aa).

Disordered stretches follow at residues 1–50 (MPIK…GRVT) and 206–276 (GKAG…SKKR). Positions 7-19 (RPTTPTRRFQTVV) are enriched in polar residues. Positions 20–38 (SREDITKQTPEKSLVESKK) are enriched in basic and acidic residues.

This sequence belongs to the universal ribosomal protein uL2 family. As to quaternary structure, part of the 50S ribosomal subunit. Forms a bridge to the 30S subunit in the 70S ribosome.

Functionally, one of the primary rRNA binding proteins. Required for association of the 30S and 50S subunits to form the 70S ribosome, for tRNA binding and peptide bond formation. It has been suggested to have peptidyltransferase activity; this is somewhat controversial. Makes several contacts with the 16S rRNA in the 70S ribosome. This is Large ribosomal subunit protein uL2 from Solibacter usitatus (strain Ellin6076).